The chain runs to 298 residues: N-acetylmuramic acid 6-phosphate etherase (298 aa).

Residues 55–218 (IHAQVSGGGR…STGLMIKSGK (164 aa)) form the SIS domain. The active-site Proton donor is the glutamate 83. The active site involves glutamate 114.

This sequence belongs to the GCKR-like family. MurNAc-6-P etherase subfamily. In terms of assembly, homodimer.

The catalysed reaction is N-acetyl-D-muramate 6-phosphate + H2O = N-acetyl-D-glucosamine 6-phosphate + (R)-lactate. Its pathway is amino-sugar metabolism; 1,6-anhydro-N-acetylmuramate degradation. It functions in the pathway amino-sugar metabolism; N-acetylmuramate degradation. It participates in cell wall biogenesis; peptidoglycan recycling. Its function is as follows. Specifically catalyzes the cleavage of the D-lactyl ether substituent of MurNAc 6-phosphate, producing GlcNAc 6-phosphate and D-lactate. Together with AnmK, is also required for the utilization of anhydro-N-acetylmuramic acid (anhMurNAc) either imported from the medium or derived from its own cell wall murein, and thus plays a role in cell wall recycling. This Escherichia coli O17:K52:H18 (strain UMN026 / ExPEC) protein is N-acetylmuramic acid 6-phosphate etherase.